Here is a 347-residue protein sequence, read N- to C-terminus: Ornithine carbamoyltransferase (347 aa).

Residues 56–59 (STRT), Gln83, Arg107, and 134–137 (HPTQ) contribute to the carbamoyl phosphate site. L-ornithine-binding positions include Asn168, Asp232, and 236-237 (SM). Carbamoyl phosphate-binding positions include 274–275 (CL) and Arg320.

Belongs to the aspartate/ornithine carbamoyltransferase superfamily. OTCase family.

The protein localises to the cytoplasm. The catalysed reaction is carbamoyl phosphate + L-ornithine = L-citrulline + phosphate + H(+). In terms of biological role, reversibly catalyzes the transfer of the carbamoyl group from carbamoyl phosphate (CP) to the N(epsilon) atom of ornithine (ORN) to produce L-citrulline. The polypeptide is Ornithine carbamoyltransferase (Blochmanniella floridana).